Here is a 612-residue protein sequence, read N- to C-terminus: Methionine--tRNA ligase (612 aa).

The short motif at 12–22 (PYANGPRHIGH) is the 'HIGH' region element. 4 residues coordinate Zn(2+): Cys144, Cys147, Cys157, and Cys160. A 'KMSKS' region motif is present at residues 348–352 (KFSSS). An ATP-binding site is contributed by Ser351.

The protein belongs to the class-I aminoacyl-tRNA synthetase family. MetG type 1 subfamily. Monomer. The cofactor is Zn(2+).

It is found in the cytoplasm. The catalysed reaction is tRNA(Met) + L-methionine + ATP = L-methionyl-tRNA(Met) + AMP + diphosphate. Is required not only for elongation of protein synthesis but also for the initiation of all mRNA translation through initiator tRNA(fMet) aminoacylation. The sequence is that of Methionine--tRNA ligase from Corynebacterium kroppenstedtii (strain DSM 44385 / JCM 11950 / CIP 105744 / CCUG 35717).